The sequence spans 541 residues: Chaperonin GroEL (541 aa).

ATP is bound by residues 29-32 (TLGP), 86-90 (DGTTT), Gly-413, 476-478 (NAA), and Asp-492.

It belongs to the chaperonin (HSP60) family. Forms a cylinder of 14 subunits composed of two heptameric rings stacked back-to-back. Interacts with the co-chaperonin GroES.

The protein resides in the cytoplasm. It carries out the reaction ATP + H2O + a folded polypeptide = ADP + phosphate + an unfolded polypeptide.. Together with its co-chaperonin GroES, plays an essential role in assisting protein folding. The GroEL-GroES system forms a nano-cage that allows encapsulation of the non-native substrate proteins and provides a physical environment optimized to promote and accelerate protein folding. The chain is Chaperonin GroEL from Enterococcus faecalis (strain ATCC 700802 / V583).